The following is a 906-amino-acid chain: Coatomer subunit beta' (906 aa).

6 WD repeats span residues 13-52 (ARSD…LVKT), 55-94 (VCDL…RVHM), 97-136 (AHSD…SCSQ), 140-180 (GHTH…PNFT), 183-224 (GHEK…CVQT), and 227-266 (GHAQ…LEST). At Lys627 the chain carries N6-acetyllysine. Residues 837–870 (EEGKDFQPSRSTAQQELDGKPASPTPVIVASHTA) form a disordered region. Position 859 is a phosphoserine (Ser859). Thr861 carries the phosphothreonine modification. Positions 866–891 (ASHTANKEEKSLLELEVDLDNLELED) form a coiled coil.

It belongs to the WD repeat COPB2 family. As to quaternary structure, oligomeric complex that consists of at least the alpha, beta, beta', gamma, delta, epsilon and zeta subunits. Probably interacts with PEX11A. Interacts with SCYL1. Interacts with JAGN1.

The protein resides in the cytoplasm. Its subcellular location is the cytosol. It localises to the golgi apparatus membrane. It is found in the cytoplasmic vesicle. The protein localises to the COPI-coated vesicle membrane. The coatomer is a cytosolic protein complex that binds to dilysine motifs and reversibly associates with Golgi non-clathrin-coated vesicles, which further mediate biosynthetic protein transport from the ER, via the Golgi up to the trans Golgi network. Coatomer complex is required for budding from Golgi membranes, and is essential for the retrograde Golgi-to-ER transport of dilysine-tagged proteins. In mammals, the coatomer can only be recruited by membranes associated to ADP-ribosylation factors (ARFs), which are small GTP-binding proteins; the complex also influences the Golgi structural integrity, as well as the processing, activity, and endocytic recycling of LDL receptors. In terms of biological role, this coatomer complex protein, essential for Golgi budding and vesicular trafficking, is a selective binding protein (RACK) for protein kinase C, epsilon type. It binds to Golgi membranes in a GTP-dependent manner. The polypeptide is Coatomer subunit beta' (COPB2) (Homo sapiens (Human)).